Reading from the N-terminus, the 404-residue chain is 8-amino-7-oxononanoate synthase (404 aa).

Arginine 20 provides a ligand contact to substrate. Position 116 to 117 (116 to 117 (GY)) interacts with pyridoxal 5'-phosphate. Residue histidine 141 coordinates substrate. Positions 187, 215, and 243 each coordinate pyridoxal 5'-phosphate. N6-(pyridoxal phosphate)lysine is present on lysine 246. Threonine 366 is a substrate binding site.

This sequence belongs to the class-II pyridoxal-phosphate-dependent aminotransferase family. BioF subfamily. In terms of assembly, homodimer. Pyridoxal 5'-phosphate serves as cofactor.

The enzyme catalyses 6-carboxyhexanoyl-[ACP] + L-alanine + H(+) = (8S)-8-amino-7-oxononanoate + holo-[ACP] + CO2. It functions in the pathway cofactor biosynthesis; biotin biosynthesis. Its function is as follows. Catalyzes the decarboxylative condensation of pimeloyl-[acyl-carrier protein] and L-alanine to produce 8-amino-7-oxononanoate (AON), [acyl-carrier protein], and carbon dioxide. The chain is 8-amino-7-oxononanoate synthase from Cupriavidus necator (strain ATCC 17699 / DSM 428 / KCTC 22496 / NCIMB 10442 / H16 / Stanier 337) (Ralstonia eutropha).